Here is a 432-residue protein sequence, read N- to C-terminus: 3-phosphoshikimate 1-carboxyvinyltransferase (432 aa).

Lys23, Ser24, and Arg28 together coordinate 3-phosphoshikimate. Lys23 contacts phosphoenolpyruvate. Phosphoenolpyruvate is bound by residues Gly95 and Arg123. 3-phosphoshikimate-binding residues include Ser167, Gln169, Asp317, and Lys344. Residue Gln169 participates in phosphoenolpyruvate binding. The active-site Proton acceptor is the Asp317. Positions 348 and 390 each coordinate phosphoenolpyruvate.

It belongs to the EPSP synthase family. As to quaternary structure, monomer.

It localises to the cytoplasm. It carries out the reaction 3-phosphoshikimate + phosphoenolpyruvate = 5-O-(1-carboxyvinyl)-3-phosphoshikimate + phosphate. It functions in the pathway metabolic intermediate biosynthesis; chorismate biosynthesis; chorismate from D-erythrose 4-phosphate and phosphoenolpyruvate: step 6/7. Functionally, catalyzes the transfer of the enolpyruvyl moiety of phosphoenolpyruvate (PEP) to the 5-hydroxyl of shikimate-3-phosphate (S3P) to produce enolpyruvyl shikimate-3-phosphate and inorganic phosphate. The protein is 3-phosphoshikimate 1-carboxyvinyltransferase of Staphylococcus saprophyticus subsp. saprophyticus (strain ATCC 15305 / DSM 20229 / NCIMB 8711 / NCTC 7292 / S-41).